A 357-amino-acid chain; its full sequence is Probable RNA methyltransferase Daro_1157 (357 aa).

Glu91 (proton acceptor) is an active-site residue. A Radical SAM core domain is found at 94–320 (LLPRDGLCIS…TTVRNSAGQD (227 aa)). The cysteines at positions 101 and 325 are disulfide-linked. Residues Cys108, Cys112, and Cys115 each contribute to the [4Fe-4S] cluster site. Residues 153-154 (GE), Ser183, 206-208 (SLH), and Asn282 each bind S-adenosyl-L-methionine. Catalysis depends on Cys325, which acts as the S-methylcysteine intermediate.

It belongs to the radical SAM superfamily. RlmN family. It depends on [4Fe-4S] cluster as a cofactor.

The protein resides in the cytoplasm. This is Probable RNA methyltransferase Daro_1157 from Dechloromonas aromatica (strain RCB).